Here is a 493-residue protein sequence, read N- to C-terminus: Voltage-gated potassium channel regulatory subunit KCNF1 (493 aa).

The Cytoplasmic segment spans residues 1-183; sequence MDASAEQSLP…KPESSCPARV (183 aa). A helical transmembrane segment spans residues 184-204; sequence VAVLSFLLILVSSVVMCMGTI. A helical transmembrane segment spans residues 224–244; the sequence is NVETACIGWFTLEYLLRLFSS. The Cytoplasmic portion of the chain corresponds to 245–249; the sequence is PNKLH. The chain crosses the membrane as a helical span at residues 250–270; it reads FALSFMNIVDVLAILPFYVSL. The chain crosses the membrane as a helical; Voltage-sensor span at residues 290 to 310; that stretch reads QALRIMRIARIFKLARHSSGL. Residues 311-324 are Cytoplasmic-facing; that stretch reads QTLTYALKRSFKEL. Residues 325 to 345 traverse the membrane as a helical segment; it reads GLLLMYLAVGIFVFSALGYTM. The segment at residues 358–378 is an intramembrane region (pore-forming); the sequence is PQSFWWAIITMTTVGYGDIYP. The Selectivity filter signature appears at 370 to 375; it reads TVGYGD. A helical membrane pass occupies residues 386-406; the sequence is NAAISFLCGVIAIALPIHPII. The Cytoplasmic segment spans residues 407 to 493; that stretch reads NNFVRYYNKQ…HHRTRLQSCK (87 aa). A disordered region spans residues 434 to 468; that stretch reads SSSAEGKPGGSRSDLDTLPPEPAAREGPSWGSRLK.

Belongs to the potassium channel family. F (TC 1.A.1.2) subfamily. Kv5.1/KCNF1 sub-subfamily. Heterotetramer with KCNB1 or KCNB2.

Its subcellular location is the cell membrane. In terms of biological role, regulatory alpha-subunit of the voltage-gated potassium (Kv) channel which, when coassembled with KCNB1 or KCNB2, can modulate their expression and their gating kinetics by acting on deactivation upon repolarization and inactivation during maintained depolarization. Accelerates inactivation but has relatively little effect on deactivation. Coexpression with KCNB1 or KCNB2 markedly slows inactivation. Each modulatory subunit has its own specific properties of regulation, and can lead to extensive inhibitions, to large changes in kinetics, and/or to large shifts in the voltage dependencies of the inactivation process. The gating kinetics depends on the nature and stoichiometry of the associated regulatory sunbunit. Fails to produce a potassium current when expressed alone. The protein is Voltage-gated potassium channel regulatory subunit KCNF1 of Mus musculus (Mouse).